A 203-amino-acid polypeptide reads, in one-letter code: Holliday junction branch migration complex subunit RuvA (203 aa).

Residues 1–64 form a domain I region; it reads MIGRLRGIII…EDAQLLYGFN (64 aa). Residues 65–142 are domain II; sequence NKQERTLFKE…KGLHGDLFTP (78 aa). A flexible linker region spans residues 143–154; the sequence is AADLVLTSPASP. The domain III stretch occupies residues 155-203; sequence ATDDAEQEAVAALVALGYKPQEASRMVSKIARPDASSETLIREALHAAL.

The protein belongs to the RuvA family. As to quaternary structure, homotetramer. Forms an RuvA(8)-RuvB(12)-Holliday junction (HJ) complex. HJ DNA is sandwiched between 2 RuvA tetramers; dsDNA enters through RuvA and exits via RuvB. An RuvB hexamer assembles on each DNA strand where it exits the tetramer. Each RuvB hexamer is contacted by two RuvA subunits (via domain III) on 2 adjacent RuvB subunits; this complex drives branch migration. In the full resolvosome a probable DNA-RuvA(4)-RuvB(12)-RuvC(2) complex forms which resolves the HJ.

It localises to the cytoplasm. The RuvA-RuvB-RuvC complex processes Holliday junction (HJ) DNA during genetic recombination and DNA repair, while the RuvA-RuvB complex plays an important role in the rescue of blocked DNA replication forks via replication fork reversal (RFR). RuvA specifically binds to HJ cruciform DNA, conferring on it an open structure. The RuvB hexamer acts as an ATP-dependent pump, pulling dsDNA into and through the RuvAB complex. HJ branch migration allows RuvC to scan DNA until it finds its consensus sequence, where it cleaves and resolves the cruciform DNA. The protein is Holliday junction branch migration complex subunit RuvA of Escherichia fergusonii (strain ATCC 35469 / DSM 13698 / CCUG 18766 / IAM 14443 / JCM 21226 / LMG 7866 / NBRC 102419 / NCTC 12128 / CDC 0568-73).